The primary structure comprises 1276 residues: Component of gems protein 5 (1276 aa).

An interaction with U4 snRNA region spans residues 53–55 (NWY). WD repeat units lie at residues 92–139 (GHTD…DDHN), 183–223 (EHKA…VFPI), 228–268 (GNNI…TVCK), 271–336 (AHSA…IESG), 364–405 (NDKQ…SPPE), 438–481 (TTKN…IKIQ), 485–522 (GFVY…KDAY), and 530–574 (GIQS…SKIF). Positions 138–157 (HNEDTEIGDDFKHGSGGGGS) are disordered. The disordered stretch occupies residues 586-652 (IWKPPPTPTP…NSNNEQQPNK (67 aa)). Residues 598–646 (NINNNNNNNNNNNNNNNNNNNNNNNNNNNNNNNNNNNNINNNNNNNSNN) show a composition bias toward low complexity. WD repeat units follow at residues 688 to 727 (TFSK…LTRI) and 729 to 771 (EHKK…NQNE). Residues 772–793 (NEKKIDNEKGKENENEKGKENE) are compositionally biased toward basic and acidic residues. Residues 772 to 809 (NEKKIDNEKGKENENEKGKENENENENENENENENENE) form a disordered region. The stretch at 778–829 (NEKGKENENEKGKENENENENENENENENENENEIENIVNNNNENDTEIEIK) forms a coiled coil. The segment covering 794–809 (NENENENENENENENE) has biased composition (acidic residues). 2 WD repeats span residues 863-903 (GHKN…AISN) and 906-946 (GHDG…FKTV). The segment at 967–997 (ITEQQQQQQQPQSPIKSNPDQSNNPSLVPPI) is disordered. Residues 979-992 (SPIKSNPDQSNNPS) show a composition bias toward polar residues.

This sequence belongs to the WD repeat gemin-5 family. Part of the core SMN complex.

The protein localises to the nucleus. Its subcellular location is the nucleoplasm. It localises to the gem. It is found in the cytoplasm. In terms of biological role, the SMN complex catalyzes the assembly of small nuclear ribonucleoproteins (snRNPs), the building blocks of the spliceosome, and thereby plays an important role in the splicing of cellular pre-mRNAs. Most spliceosomal snRNPs contain a common set of Sm proteins SNRPB, SNRPD1, SNRPD2, SNRPD3, SNRPE, SNRPF and SNRPG that assemble in a heptameric protein ring on the Sm site of the small nuclear RNA to form the core snRNP (Sm core). In the cytosol, the Sm proteins SNRPD1, SNRPD2, SNRPE, SNRPF and SNRPG are trapped in an inactive 6S pICln-Sm complex by the chaperone CLNS1A that controls the assembly of the core snRNP. To assemble core snRNPs, the SMN complex accepts the trapped 5Sm proteins from CLNS1A forming an intermediate. Binding of snRNA inside 5Sm ultimately triggers eviction of the SMN complex, thereby allowing binding of SNRPD3 and SNRPB to complete assembly of the core snRNP. Within the SMN complex, GEMIN5 recognizes and delivers the small nuclear RNAs (snRNAs) to the SMN complex. Binds to the 7-methylguanosine cap of RNA molecules. This Dictyostelium discoideum (Social amoeba) protein is Component of gems protein 5 (gemin5).